Here is a 301-residue protein sequence, read N- to C-terminus: Probable alpha-L-glutamate ligase (301 aa).

An ATP-grasp domain is found at 104–287 (LQLLSRRGIG…VAGMIIEHLE (184 aa)). ATP-binding positions include K141, 178 to 179 (EY), D187, and 211 to 213 (RSN). Residues D248, E260, and N262 each contribute to the Mg(2+) site. Residues D248, E260, and N262 each contribute to the Mn(2+) site.

This sequence belongs to the RimK family. It depends on Mg(2+) as a cofactor. The cofactor is Mn(2+).

The protein is Probable alpha-L-glutamate ligase of Pseudomonas putida (strain ATCC 700007 / DSM 6899 / JCM 31910 / BCRC 17059 / LMG 24140 / F1).